The sequence spans 159 residues: Transcription elongation factor GreA (159 aa).

Residues S47 to E77 adopt a coiled-coil conformation.

Belongs to the GreA/GreB family.

Necessary for efficient RNA polymerase transcription elongation past template-encoded arresting sites. The arresting sites in DNA have the property of trapping a certain fraction of elongating RNA polymerases that pass through, resulting in locked ternary complexes. Cleavage of the nascent transcript by cleavage factors such as GreA or GreB allows the resumption of elongation from the new 3'terminus. GreA releases sequences of 2 to 3 nucleotides. The protein is Transcription elongation factor GreA of Metamycoplasma arthritidis (strain 158L3-1) (Mycoplasma arthritidis).